A 178-amino-acid polypeptide reads, in one-letter code: MIITVGGLPGTGTTTTSKLLSEKYGLNHVCAGFIFRDMAKEMNMTLQEFSSYAETNTEVDNEIDRRQVEAAQSGDLILEGRLAGWILKRSDIKPDLSIWLKADPMVRCIRISERENENVDLALEKMISREASEKKRYKEIYNIEIDDLSIYDLTIESSKWDAKGVFNIIEKAIDNLKA.

7 to 15 (GLPGTGTTT) contributes to the ATP binding site.

It belongs to the cytidylate kinase family. Type 2 subfamily.

The protein localises to the cytoplasm. The catalysed reaction is CMP + ATP = CDP + ADP. It carries out the reaction dCMP + ATP = dCDP + ADP. The chain is Cytidylate kinase from Methanococcus maripaludis (strain DSM 14266 / JCM 13030 / NBRC 101832 / S2 / LL).